Here is a 318-residue protein sequence, read N- to C-terminus: L-lactate dehydrogenase (318 aa).

NAD(+) is bound by residues Val-17, Asp-38, Lys-43, Tyr-69, and 83 to 84; that span reads GA. Substrate contacts are provided by Gln-86 and Arg-92. NAD(+) contacts are provided by residues Ser-105, 122–124, and Ser-147; that span reads ATN. Residue 124–127 participates in substrate binding; that stretch reads NPVD. 152–155 contributes to the substrate binding site; sequence DTAR. Beta-D-fructose 1,6-bisphosphate is bound by residues Lys-157 and His-172. His-179 serves as the catalytic Proton acceptor. Phosphotyrosine is present on Tyr-223. Residue Thr-232 coordinates substrate.

This sequence belongs to the LDH/MDH superfamily. LDH family. Homotetramer.

Its subcellular location is the cytoplasm. It catalyses the reaction (S)-lactate + NAD(+) = pyruvate + NADH + H(+). Its pathway is fermentation; pyruvate fermentation to lactate; (S)-lactate from pyruvate: step 1/1. Allosterically activated by fructose 1,6-bisphosphate (FBP). Functionally, catalyzes the conversion of lactate to pyruvate. The protein is L-lactate dehydrogenase of Staphylococcus saprophyticus subsp. saprophyticus (strain ATCC 15305 / DSM 20229 / NCIMB 8711 / NCTC 7292 / S-41).